Consider the following 240-residue polypeptide: Cysteine-rich secretory protein (240 aa).

An N-terminal signal peptide occupies residues 1–19; that stretch reads MIAFIVLPILAAVLQQSSG. The 129-residue stretch at 38–166 folds into the SCP domain; sequence VDLHNSLRRS…EYSYFYVCQY (129 aa). Disulfide bonds link Cys75-Cys153, Cys92-Cys167, Cys148-Cys164, Cys186-Cys193, Cys189-Cys198, Cys202-Cys235, Cys211-Cys229, and Cys220-Cys233. The region spanning 202–235 is the ShKT domain; sequence CTKEDKYSNCKSLVQQAGCQDKQMQSDCSAICFC.

Belongs to the CRISP family. As to expression, expressed by the venom gland.

The protein localises to the secreted. Functionally, weakly blocks contraction of smooth muscle elicited by high potassium-induced depolarization, but does not block caffeine-stimulated contraction. May target voltage-gated calcium channels on smooth muscle. The polypeptide is Cysteine-rich secretory protein (Crotalus adamanteus (Eastern diamondback rattlesnake)).